A 100-amino-acid chain; its full sequence is Urease subunit gamma (100 aa).

It belongs to the urease gamma subunit family. As to quaternary structure, heterotrimer of UreA (gamma), UreB (beta) and UreC (alpha) subunits. Three heterotrimers associate to form the active enzyme.

It localises to the cytoplasm. The enzyme catalyses urea + 2 H2O + H(+) = hydrogencarbonate + 2 NH4(+). Its pathway is nitrogen metabolism; urea degradation; CO(2) and NH(3) from urea (urease route): step 1/1. This Mycolicibacterium vanbaalenii (strain DSM 7251 / JCM 13017 / BCRC 16820 / KCTC 9966 / NRRL B-24157 / PYR-1) (Mycobacterium vanbaalenii) protein is Urease subunit gamma.